The chain runs to 394 residues: Ceramide synthase 4 (394 aa).

Topologically, residues 1-31 are lumenal; sequence MLSSFNEWFWQDRFWLPPNVTWTELEDRDGR. An N-linked (GlcNAc...) asparagine glycan is attached at Asn-19. Residues 32–52 form a helical membrane-spanning segment; sequence VYPHPQDLLAALPLALVLLAM. Positions 67–128 are homeobox-like; the sequence is WLGVRDQTRR…RRRRNQDRPQ (62 aa). A TLC domain is found at 131–332; it reads KKFCEASWRF…ILRMLYSFMK (202 aa). 4 consecutive transmembrane segments (helical) span residues 140–160, 179–199, 209–229, and 260–280; these read FLFY…ESWL, LYWW…RLPF, QVIH…ANLL, and VCDA…LVLF. A Last loop motif motif is present at residues 291–301; that stretch reads ESISNRGPFFG. The helical transmembrane segment at 304–324 threads the bilayer; it reads FFNGLLMLLQLLHVFWSCLIL. At 325 to 394 the chain is on the cytoplasmic side; it reads RMLYSFMKKG…RLTNRHTTAT (70 aa). A disordered region spans residues 341-394; the sequence is RSDVEESDSSEEAAAAQEPLQLKNGAAGGPRPAPTDGPRSRVAGRLTNRHTTAT. Phosphoserine is present on residues Ser-342, Ser-349, and Ser-350.

Post-translationally, phosphorylated at the C-terminus by CK2. In terms of processing, N-glycosylated.

The protein localises to the endoplasmic reticulum membrane. The enzyme catalyses sphinganine + octadecanoyl-CoA = N-(octadecanoyl)-sphinganine + CoA + H(+). It catalyses the reaction eicosanoyl-CoA + sphinganine = N-eicosanoylsphinganine + CoA + H(+). The catalysed reaction is docosanoyl-CoA + sphinganine = N-docosanoylsphinganine + CoA + H(+). It carries out the reaction tetracosanoyl-CoA + sphinganine = N-tetracosanoylsphinganine + CoA + H(+). The enzyme catalyses hexacosanoyl-CoA + sphinganine = N-hexacosanoylsphinganine + CoA + H(+). It catalyses the reaction a fatty acyl-CoA + sphing-4-enine = an N-acylsphing-4-enine + CoA + H(+). The catalysed reaction is sphing-4-enine + octadecanoyl-CoA = N-octadecanoylsphing-4-enine + CoA + H(+). It carries out the reaction hexadecasphinganine + octadecanoyl-CoA = N-octadecanoylhexadecasphinganine + CoA + H(+). Its pathway is lipid metabolism; sphingolipid metabolism. Functionally, ceramide synthase that catalyzes formation of ceramide from sphinganine and acyl-CoA substrates, with high selectivity toward long and very-long chains (C18:0-C22:0) as acyl donor. The polypeptide is Ceramide synthase 4 (Homo sapiens (Human)).